Reading from the N-terminus, the 163-residue chain is Urease accessory protein UreE (163 aa).

Residues 144–163 (QPEPGAYGGSSAGSHDGHHH) are disordered.

Belongs to the UreE family.

Its subcellular location is the cytoplasm. Involved in urease metallocenter assembly. Binds nickel. Probably functions as a nickel donor during metallocenter assembly. The polypeptide is Urease accessory protein UreE (Aliivibrio fischeri (strain MJ11) (Vibrio fischeri)).